The following is a 126-amino-acid chain: 13 kDa ribonucleoprotein-associated protein (126 aa).

Belongs to the eukaryotic ribosomal protein eL8 family. As to quaternary structure, component of the U3 snoRNP particle. Binds to the C'/D and B/C motifs in U3 snoRNA. Component of the 25S U4/U6.U5 tri-snRNP particle, a subcomplex of the spliceosome. Binds to the 5' stem-loop of U4 snRNA.

Its subcellular location is the nucleus. The protein localises to the nucleolus. Common component of the spliceosome and rRNA processing machinery. In association with the spliceosomal U4/U6.U5 tri-snRNP particle, required for splicing of pre-mRNA. In association with box C/D snoRNPs, required for processing of pre-ribosomal RNA (rRNA) and site-specific 2'-O-methylation of substrate RNAs. Essential for the accumulation and stability of U4 snRNA, U6 snRNA, and box C/D snoRNAs. This is 13 kDa ribonucleoprotein-associated protein (SNU13) from Yarrowia lipolytica (strain CLIB 122 / E 150) (Yeast).